Consider the following 248-residue polypeptide: 14-3-3 protein zeta (248 aa).

The protein belongs to the 14-3-3 family. As to quaternary structure, homodimer; homodimerization is not essential for modulating the activity of Slo. Interacts with phosphorylated Slob; the interaction with Slob mediates an indirect interaction with Slo. Interacts with phosphorylated yki. Interacts with hemo; this represses 14-3-3zeta activity which prevents the 14-3-3zeta-mediated activation of phosphoinositide 3-kinase Pi3K68D. This, in turn, inhibits the Pi3K68D-mediated conversion of phosphatidylinositol to phosphatidylinositol-3-phosphate and prevents progression of early endosomes through the maturation process which regulates subsequent steps of phagocytic processing. Interacts with REPTOR (when phosphorylated), this interaction may assist the cytoplasmic retention of REPTOR. In terms of tissue distribution, predominantly expressed in the ventral nerve cord of the embryo, and in the neural tissues of the head. Also found in the region posterior to the morphogenetic furrow of the eye imaginal disk where cells differentiate as photoreceptors.

It localises to the cytoplasm. Its subcellular location is the early endosome. Its function is as follows. Required in Raf-dependent cell proliferation and photoreceptor differentiation during eye development. Acts upstream of Raf and downstream of Ras, and is essential for viability. Acts as a negative regulator of the slo calcium channel via its interaction with slo-binding protein slob. Inhibits yki activity by restricting its nuclear localization. Binds to and promotes the activity of phosphoinositide 3-kinase Pi3K68D which converts phosphatidylinositol to phosphatidylinositol-3-phosphate and promotes maturation of early endosomes. The polypeptide is 14-3-3 protein zeta (14-3-3zeta) (Drosophila melanogaster (Fruit fly)).